We begin with the raw amino-acid sequence, 1577 residues long: Probable serine/threonine-protein kinase gdt9 (1577 aa).

A signal peptide spans 1-16; that stretch reads MKTFLLIFLLICVCKG. Over 17–966 the chain is Extracellular; sequence ITNITTPSIY…NNEDNHKKLV (950 aa). The chain crosses the membrane as a helical span at residues 967–987; that stretch reads IALSVSIPVAALLVILCFGIF. Over 988 to 1577 the chain is Cytoplasmic; that stretch reads ICYNNNKKNK…SLVKIFKRFN (590 aa). The span at 998–1014 shows a compositional bias: basic and acidic residues; it reads NETKGKDIETNTDKKDD. Disordered regions lie at residues 998-1019 and 1050-1128; these read NETK…NENE and TLPP…FPTI. Positions 1050-1082 are enriched in polar residues; the sequence is TLPPQSTISIDTSPSSENTTFTESLTPKKSATV. Over residues 1091 to 1115 the composition is skewed to low complexity; it reads NSTNESTVSNSSSENNSDNNNNNNN. Residues 1290–1573 form the Protein kinase domain; that stretch reads LDFDEICGQG…EIVFSLVKIF (284 aa). Residues 1296–1304 and Lys-1317 contribute to the ATP site; that span reads CGQGTYGMV. Asp-1436 functions as the Proton acceptor in the catalytic mechanism.

In the N-terminal section; belongs to the GDT family. This sequence in the C-terminal section; belongs to the protein kinase superfamily. TKL Ser/Thr protein kinase family.

The protein localises to the membrane. The catalysed reaction is L-seryl-[protein] + ATP = O-phospho-L-seryl-[protein] + ADP + H(+). It carries out the reaction L-threonyl-[protein] + ATP = O-phospho-L-threonyl-[protein] + ADP + H(+). This is Probable serine/threonine-protein kinase gdt9 (gdt9) from Dictyostelium discoideum (Social amoeba).